Here is a 350-residue protein sequence, read N- to C-terminus: Biotin synthase (350 aa).

The Radical SAM core domain occupies 38–256 (NHVQVSTLLS…IAVARIMMPK (219 aa)). [4Fe-4S] cluster contacts are provided by Cys53, Cys57, and Cys60. The [2Fe-2S] cluster site is built by Cys97, Cys128, Cys188, and Arg260.

This sequence belongs to the radical SAM superfamily. Biotin synthase family. Homodimer. [4Fe-4S] cluster is required as a cofactor. [2Fe-2S] cluster serves as cofactor.

The enzyme catalyses (4R,5S)-dethiobiotin + (sulfur carrier)-SH + 2 reduced [2Fe-2S]-[ferredoxin] + 2 S-adenosyl-L-methionine = (sulfur carrier)-H + biotin + 2 5'-deoxyadenosine + 2 L-methionine + 2 oxidized [2Fe-2S]-[ferredoxin]. Its pathway is cofactor biosynthesis; biotin biosynthesis; biotin from 7,8-diaminononanoate: step 2/2. Catalyzes the conversion of dethiobiotin (DTB) to biotin by the insertion of a sulfur atom into dethiobiotin via a radical-based mechanism. The polypeptide is Biotin synthase (Vibrio cholerae serotype O1 (strain ATCC 39541 / Classical Ogawa 395 / O395)).